We begin with the raw amino-acid sequence, 719 residues long: Polyribonucleotide nucleotidyltransferase (719 aa).

Mg(2+) contacts are provided by D487 and D493. In terms of domain architecture, KH spans 554 to 613; that stretch reads PRIETFKIATDKIREVIGTGGKVIREIVEKTGAKVNIEDDGTVKVASSDGEAMKAAIKWI. In terms of domain architecture, S1 motif spans 623–691; it reads GQIYDGTVVK…DRGKTRLSMK (69 aa). Residues 691-719 form a disordered region; that stretch reads KVVDQTTGEDLEAKQKDAPAEAPREAAGE. The span at 701–719 shows a compositional bias: basic and acidic residues; sequence LEAKQKDAPAEAPREAAGE.

The protein belongs to the polyribonucleotide nucleotidyltransferase family. Mg(2+) serves as cofactor.

The protein resides in the cytoplasm. It carries out the reaction RNA(n+1) + phosphate = RNA(n) + a ribonucleoside 5'-diphosphate. Involved in mRNA degradation. Catalyzes the phosphorolysis of single-stranded polyribonucleotides processively in the 3'- to 5'-direction. The polypeptide is Polyribonucleotide nucleotidyltransferase (Bradyrhizobium sp. (strain ORS 278)).